Consider the following 436-residue polypeptide: Na(+)/H(+) antiporter NhaA 1 (436 aa).

The next 11 membrane-spanning stretches (helical) occupy residues 35–55, 80–100, 116–136, 147–167, 176–196, 201–221, 226–246, 283–303, 313–333, 354–374, and 385–405; these read FGGG…NSPW, LATW…GLEL, ALPV…YVGV, GWAI…AVIG, AFLL…IAIF, FKLT…LLVQ, WWWA…ESGV, VSAG…SLRG, PIVV…IFGS, LLGV…IGEL, and VKAA…IVLI.

The protein belongs to the NhaA Na(+)/H(+) (TC 2.A.33) antiporter family.

The protein localises to the cell membrane. The enzyme catalyses Na(+)(in) + 2 H(+)(out) = Na(+)(out) + 2 H(+)(in). In terms of biological role, na(+)/H(+) antiporter that extrudes sodium in exchange for external protons. This is Na(+)/H(+) antiporter NhaA 1 from Salinispora tropica (strain ATCC BAA-916 / DSM 44818 / JCM 13857 / NBRC 105044 / CNB-440).